A 207-amino-acid chain; its full sequence is Uracil phosphoribosyltransferase (207 aa).

Residues Arg-77, Arg-102, and 129–137 (DPMLATGGS) contribute to the 5-phospho-alpha-D-ribose 1-diphosphate site. Residues Ile-192 and 197–199 (GDA) each bind uracil. Asp-198 contributes to the 5-phospho-alpha-D-ribose 1-diphosphate binding site.

This sequence belongs to the UPRTase family. It depends on Mg(2+) as a cofactor.

The enzyme catalyses UMP + diphosphate = 5-phospho-alpha-D-ribose 1-diphosphate + uracil. The protein operates within pyrimidine metabolism; UMP biosynthesis via salvage pathway; UMP from uracil: step 1/1. Its activity is regulated as follows. Allosterically activated by GTP. Its function is as follows. Catalyzes the conversion of uracil and 5-phospho-alpha-D-ribose 1-diphosphate (PRPP) to UMP and diphosphate. The polypeptide is Uracil phosphoribosyltransferase (Mesoplasma florum (strain ATCC 33453 / NBRC 100688 / NCTC 11704 / L1) (Acholeplasma florum)).